The chain runs to 495 residues: Ribosome biogenesis protein YTM1 (495 aa).

Residues Val15–Arg97 form a ubiquitin-like (UBL) domain region. WD repeat units lie at residues Trp129–Ser168, Gly175–Gly213, Gly223–Pro262, Ala264–Ile295, His296–Thr337, Gly386–Lys426, and Gly458–Lys495.

This sequence belongs to the WD repeat WDR12/YTM1 family. In terms of assembly, component of the NOP7 complex, composed of ERB1, NOP7 and YTM1. The complex is held together by ERB1, which interacts with NOP7 via its N-terminal domain and with YTM1 via a high-affinity interaction between the seven-bladed beta-propeller domains of the 2 proteins. The NOP7 complex associates with the 66S pre-ribosome. Interacts (via UBL domain) with MDN1 (via VWFA/MIDAS domain).

The protein localises to the nucleus. Its subcellular location is the nucleolus. It localises to the nucleoplasm. Functionally, component of the NOP7 complex, which is required for maturation of the 25S and 5.8S ribosomal RNAs and formation of the 60S ribosome. This chain is Ribosome biogenesis protein YTM1, found in Chaetomium thermophilum (strain DSM 1495 / CBS 144.50 / IMI 039719) (Thermochaetoides thermophila).